We begin with the raw amino-acid sequence, 251 residues long: Hydroxyacylglutathione hydrolase (251 aa).

Zn(2+) contacts are provided by His-53, His-55, Asp-57, His-58, His-110, Asp-127, and His-165.

Belongs to the metallo-beta-lactamase superfamily. Glyoxalase II family. Monomer. Zn(2+) serves as cofactor.

The catalysed reaction is an S-(2-hydroxyacyl)glutathione + H2O = a 2-hydroxy carboxylate + glutathione + H(+). It functions in the pathway secondary metabolite metabolism; methylglyoxal degradation; (R)-lactate from methylglyoxal: step 2/2. Functionally, thiolesterase that catalyzes the hydrolysis of S-D-lactoyl-glutathione to form glutathione and D-lactic acid. The sequence is that of Hydroxyacylglutathione hydrolase from Klebsiella pneumoniae subsp. pneumoniae (strain ATCC 700721 / MGH 78578).